Reading from the N-terminus, the 131-residue chain is Arsenate reductase 1 (131 aa).

Catalysis depends on nucleophile residues C10, C82, and C89. 2 disulfides stabilise this stretch: C10–C82 and C82–C89.

Belongs to the low molecular weight phosphotyrosine protein phosphatase family. Thioredoxin-coupled ArsC subfamily.

Its subcellular location is the cytoplasm. The catalysed reaction is arsenate + [thioredoxin]-dithiol + H(+) = arsenite + [thioredoxin]-disulfide + H2O. Its function is as follows. Catalyzes the reduction of arsenate [As(V)] to arsenite [As(III)]. The sequence is that of Arsenate reductase 1 from Staphylococcus saprophyticus subsp. saprophyticus (strain ATCC 15305 / DSM 20229 / NCIMB 8711 / NCTC 7292 / S-41).